We begin with the raw amino-acid sequence, 193 residues long: Ribosomal RNA small subunit methyltransferase G (193 aa).

S-adenosyl-L-methionine contacts are provided by residues Gly64, Leu69, 113-114 (IE), and Arg126.

Belongs to the methyltransferase superfamily. RNA methyltransferase RsmG family.

It is found in the cytoplasm. The catalysed reaction is guanosine(527) in 16S rRNA + S-adenosyl-L-methionine = N(7)-methylguanosine(527) in 16S rRNA + S-adenosyl-L-homocysteine. Its function is as follows. Specifically methylates the N7 position of guanine in position 527 of 16S rRNA. This chain is Ribosomal RNA small subunit methyltransferase G, found in Rickettsia massiliae (strain Mtu5).